The chain runs to 215 residues: Orotate phosphoribosyltransferase (215 aa).

Residue Lys26 coordinates 5-phospho-alpha-D-ribose 1-diphosphate. Position 34 to 35 (34 to 35 (FF)) interacts with orotate. Residues 72 to 73 (YK), Arg99, Lys100, Lys103, His105, and 125 to 133 (DDVISSGIS) contribute to the 5-phospho-alpha-D-ribose 1-diphosphate site. Residues Ser129 and Arg157 each coordinate orotate.

This sequence belongs to the purine/pyrimidine phosphoribosyltransferase family. PyrE subfamily. In terms of assembly, homodimer. Requires Mg(2+) as cofactor.

The enzyme catalyses orotidine 5'-phosphate + diphosphate = orotate + 5-phospho-alpha-D-ribose 1-diphosphate. Its pathway is pyrimidine metabolism; UMP biosynthesis via de novo pathway; UMP from orotate: step 1/2. Catalyzes the transfer of a ribosyl phosphate group from 5-phosphoribose 1-diphosphate to orotate, leading to the formation of orotidine monophosphate (OMP). This Halorhodospira halophila (strain DSM 244 / SL1) (Ectothiorhodospira halophila (strain DSM 244 / SL1)) protein is Orotate phosphoribosyltransferase.